We begin with the raw amino-acid sequence, 284 residues long: Shikimate dehydrogenase (NADP(+)) (284 aa).

Shikimate contacts are provided by residues 20 to 22 and Ser67; that span reads SIS. The active-site Proton acceptor is Lys71. Asp83 is a binding site for NADP(+). Shikimate is bound by residues Asn92 and Asp107. Residues 129–133 and Ile227 each bind NADP(+); that span reads GAGGA. Residue Tyr229 participates in shikimate binding. Position 250 (Gly250) interacts with NADP(+).

It belongs to the shikimate dehydrogenase family. Homodimer.

It carries out the reaction shikimate + NADP(+) = 3-dehydroshikimate + NADPH + H(+). It functions in the pathway metabolic intermediate biosynthesis; chorismate biosynthesis; chorismate from D-erythrose 4-phosphate and phosphoenolpyruvate: step 4/7. Its function is as follows. Involved in the biosynthesis of the chorismate, which leads to the biosynthesis of aromatic amino acids. Catalyzes the reversible NADPH linked reduction of 3-dehydroshikimate (DHSA) to yield shikimate (SA). This is Shikimate dehydrogenase (NADP(+)) from Streptococcus pneumoniae (strain CGSP14).